Reading from the N-terminus, the 81-residue chain is ATP synthase subunit c (81 aa).

The next 2 helical transmembrane spans lie at 7–27 (FVAL…CIGI) and 53–73 (FLLA…AMMF).

Belongs to the ATPase C chain family. As to quaternary structure, F-type ATPases have 2 components, F(1) - the catalytic core - and F(0) - the membrane proton channel. F(1) has five subunits: alpha(3), beta(3), gamma(1), delta(1), epsilon(1). F(0) has three main subunits: a(1), b(2) and c(10-14). The alpha and beta chains form an alternating ring which encloses part of the gamma chain. F(1) is attached to F(0) by a central stalk formed by the gamma and epsilon chains, while a peripheral stalk is formed by the delta and b chains.

The protein resides in the cell inner membrane. Functionally, f(1)F(0) ATP synthase produces ATP from ADP in the presence of a proton or sodium gradient. F-type ATPases consist of two structural domains, F(1) containing the extramembraneous catalytic core and F(0) containing the membrane proton channel, linked together by a central stalk and a peripheral stalk. During catalysis, ATP synthesis in the catalytic domain of F(1) is coupled via a rotary mechanism of the central stalk subunits to proton translocation. In terms of biological role, key component of the F(0) channel; it plays a direct role in translocation across the membrane. A homomeric c-ring of between 10-14 subunits forms the central stalk rotor element with the F(1) delta and epsilon subunits. This chain is ATP synthase subunit c, found in Azoarcus sp. (strain BH72).